A 144-amino-acid chain; its full sequence is MSMAYEEYMRQLVVPMRRELTGAGFEELTTAEEVENFMEKAEGTTLVVVNSVCGCAAGLARPAATQAVLQNDKTPDNTVTVFAGQDKEATAKMREYFTGQEPSSPSMALLKGKEVVHFIPRHEIEGHDMEEIMKNLTAAFDAHC.

Residues C53 and C55 each act as nucleophile in the active site. C53 carries the S-bacillithiol cysteine disulfide modification. The CXC active site motif signature appears at 53–55; the sequence is CGC. C53 and C55 form a disulfide bridge.

Belongs to the bacilliredoxin family. In terms of processing, N-terminal Cys of the CXC active site motif can react with bacillithiol (BSH) to form mixed disulfides. S-bacillithiolation protects Cys residues against overoxidation by acting as a redox switch in response to oxidative stress.

In terms of biological role, S-bacillithiolation is the formation of mixed disulfide bonds between protein thiols and the general thiol reductant bacillithiol (BSH) under oxidative stress. BSH is an equivalent of glutathione (GSH) in Firmicutes. This protein is a dithiol bacilliredoxin, which debacillithiolates (removes BSH) the S-bacillithiolated OhrR (OhrR-SSB) in vitro and in vivo NaOCl-generated S-bacillithiolated MetE (MetE-SSB). Involved in maintaining redox homeostasis in response to disulfide stress conditions. Has a redox potential of -130 mV. Displays weak protein disulfide isomerase activity in vitro. In Bacillus subtilis (strain 168), this protein is Bacilliredoxin BrxA.